The following is a 64-amino-acid chain: Large ribosomal subunit protein bL35 (64 aa).

A disordered region spans residues M1–A25.

The protein belongs to the bacterial ribosomal protein bL35 family.

This chain is Large ribosomal subunit protein bL35, found in Clostridioides difficile (strain 630) (Peptoclostridium difficile).